The sequence spans 780 residues: Ribosome biogenesis protein BOP1 homolog (780 aa).

Residues 1 to 11 (MTKKQAIKRKV) are compositionally biased toward basic residues. Positions 1–155 (MTKKQAIKRK…DSDTSDEEDI (155 aa)) are disordered. The span at 17-26 (TNEQSSASEP) shows a compositional bias: polar residues. Composition is skewed to acidic residues over residues 44-53 (EDTTDDEGID), 60-72 (SSED…DEEG), 83-113 (AEGD…DAEE), and 145-154 (EDSDTSDEED). 7 WD repeats span residues 441 to 482 (GHTD…RTIE), 484 to 522 (NDVV…KLLI), 566 to 608 (THFK…SQIP), 611 to 649 (KSKG…LIKK), 652 to 691 (TNSK…KPYQ), 695 to 734 (LHRN…DLLQ), and 750 to 780 (RDEF…RLYT).

It belongs to the WD repeat BOP1/ERB1 family.

It localises to the nucleus. Its subcellular location is the nucleolus. The protein localises to the nucleoplasm. In terms of biological role, required for maturation of ribosomal RNAs and formation of the large ribosomal subunit. The polypeptide is Ribosome biogenesis protein BOP1 homolog (Drosophila virilis (Fruit fly)).